The sequence spans 246 residues: Probable transcriptional regulatory protein YebC (246 aa).

Positions 1-20 (MAGHSKWANTRHRKAAQDAK) are disordered.

The protein belongs to the TACO1 family.

The protein localises to the cytoplasm. This chain is Probable transcriptional regulatory protein YebC, found in Shigella boydii serotype 4 (strain Sb227).